Here is a 1412-residue protein sequence, read N- to C-terminus: DNA-directed RNA polymerase subunit beta'' (1412 aa).

Residues C220, C294, C301, and C304 each contribute to the Zn(2+) site.

This sequence belongs to the RNA polymerase beta' chain family. RpoC2 subfamily. In plastids the minimal PEP RNA polymerase catalytic core is composed of four subunits: alpha, beta, beta', and beta''. When a (nuclear-encoded) sigma factor is associated with the core the holoenzyme is formed, which can initiate transcription. Zn(2+) is required as a cofactor.

Its subcellular location is the plastid. The protein localises to the chloroplast. It carries out the reaction RNA(n) + a ribonucleoside 5'-triphosphate = RNA(n+1) + diphosphate. DNA-dependent RNA polymerase catalyzes the transcription of DNA into RNA using the four ribonucleoside triphosphates as substrates. This Chara vulgaris (Common stonewort) protein is DNA-directed RNA polymerase subunit beta''.